The chain runs to 342 residues: Heat-inducible transcription repressor HrcA (342 aa).

It belongs to the HrcA family.

In terms of biological role, negative regulator of class I heat shock genes (grpE-dnaK-dnaJ and groELS operons). Prevents heat-shock induction of these operons. The chain is Heat-inducible transcription repressor HrcA from Acholeplasma laidlawii.